The following is a 292-amino-acid chain: 4-hydroxy-tetrahydrodipicolinate synthase (292 aa).

Thr45 contacts pyruvate. Tyr133 functions as the Proton donor/acceptor in the catalytic mechanism. Lys161 functions as the Schiff-base intermediate with substrate in the catalytic mechanism. Position 203 (Ile203) interacts with pyruvate.

This sequence belongs to the DapA family. As to quaternary structure, homotetramer; dimer of dimers.

The protein resides in the cytoplasm. It catalyses the reaction L-aspartate 4-semialdehyde + pyruvate = (2S,4S)-4-hydroxy-2,3,4,5-tetrahydrodipicolinate + H2O + H(+). The protein operates within amino-acid biosynthesis; L-lysine biosynthesis via DAP pathway; (S)-tetrahydrodipicolinate from L-aspartate: step 3/4. Its function is as follows. Catalyzes the condensation of (S)-aspartate-beta-semialdehyde [(S)-ASA] and pyruvate to 4-hydroxy-tetrahydrodipicolinate (HTPA). The polypeptide is 4-hydroxy-tetrahydrodipicolinate synthase (Shigella dysenteriae serotype 1 (strain Sd197)).